The chain runs to 490 residues: Pyridine nucleotide-disulfide oxidoreductase domain-containing protein 1 (490 aa).

This sequence belongs to the class-I pyridine nucleotide-disulfide oxidoreductase family. PYROXD1 subfamily. The cofactor is FAD.

It localises to the nucleus. It is found in the cytoplasm. The protein resides in the myofibril. The protein localises to the sarcomere. Probable FAD-dependent oxidoreductase; involved in the cellular oxidative stress response. Required for normal sarcomere structure and muscle fiber integrity. This is Pyridine nucleotide-disulfide oxidoreductase domain-containing protein 1 (pyroxd1) from Danio rerio (Zebrafish).